The primary structure comprises 357 residues: NADH-quinone oxidoreductase subunit H (357 aa).

Helical transmembrane passes span 26–46, 92–112, 127–147, 164–184, 203–223, 259–279, 294–314, and 329–349; these read LVKI…LTLW, ALFV…WAVI, LLFV…AGWA, MISY…VTGS, GLTF…IYII, FFLA…LMFL, VPGW…FIWF, and LGWK…AIWM.

It belongs to the complex I subunit 1 family. As to quaternary structure, NDH-1 is composed of 14 different subunits. Subunits NuoA, H, J, K, L, M, N constitute the membrane sector of the complex.

It localises to the cell inner membrane. It carries out the reaction a quinone + NADH + 5 H(+)(in) = a quinol + NAD(+) + 4 H(+)(out). Functionally, NDH-1 shuttles electrons from NADH, via FMN and iron-sulfur (Fe-S) centers, to quinones in the respiratory chain. The immediate electron acceptor for the enzyme in this species is believed to be ubiquinone. Couples the redox reaction to proton translocation (for every two electrons transferred, four hydrogen ions are translocated across the cytoplasmic membrane), and thus conserves the redox energy in a proton gradient. This subunit may bind ubiquinone. In Janthinobacterium sp. (strain Marseille) (Minibacterium massiliensis), this protein is NADH-quinone oxidoreductase subunit H.